The primary structure comprises 329 residues: MDVKETEEQRQMRRIAFVAVVVSTAAVIASVVTLPMLYNYVQSFQSHLMVETDYCKARSRDMWLEMTALQAGKGMGHRMKRAWLFGQWIPETSAGGGGSGNGGGNYGSGASTGGGANTAGYGGYGAAVNAEPAAVCCTCNQGAAGPPGPEGPPGNDGKDGRNGNDGKNGRDAEVLPAPASEPCIICPTGAPGPMGAMGPKGPPGPKGSPGEPPQDGKSGDDGMAGQPGPIGRPGRDGMKGAPGAAGRLIPVPGPQGAPGKPGPIGPPGPKGNPGPDGQSYQGPPGPPGDSGTPGHEGRAGPNGPAGPPGDNGEKGDCGHCPPPRTPPGY.

Triple-helical region regions lie at residues Gly-142–Asp-171, Gly-189–Pro-212, Gly-216–Leu-248, Gly-253–Ser-279, and Gly-282–Cys-320. The tract at residues Pro-146–Tyr-329 is disordered. The segment covering Asp-156–Glu-173 has biased composition (basic and acidic residues). Low complexity predominate over residues Pro-187–Pro-199. Residues Lys-200–Pro-212 are compositionally biased toward pro residues. The span at Val-251–Asn-272 shows a compositional bias: pro residues. Over residues Pro-273–Gly-282 the composition is skewed to low complexity. Positions Cys-320 to Tyr-329 are enriched in pro residues.

It belongs to the cuticular collagen family. Collagen polypeptide chains are complexed within the cuticle by disulfide bonds and other types of covalent cross-links.

Functionally, nematode cuticles are composed largely of collagen-like proteins. The cuticle functions both as an exoskeleton and as a barrier to protect the worm from its environment. This chain is Cuticle collagen 6, found in Caenorhabditis elegans.